The chain runs to 488 residues: NADH-ubiquinone oxidoreductase chain 2 (488 aa).

14 helical membrane passes run 4-24 (LFLA…LLIH), 45-65 (WLGL…APLL), 84-104 (FCQI…FDFF), 111-131 (AFEF…MISA), 134-154 (LIAM…LAAS), 168-188 (YLIL…MIYG), 215-235 (IFMG…AVPF), 252-272 (AFLS…VFIY), 282-302 (IFFF…MAQT), 308-328 (LAYS…CGTI), 334-354 (LLIG…IVLA), 375-395 (ILAI…PLAG), 400-420 (FYLF…VGVV), and 456-476 (LLLA…SPLF).

Belongs to the complex I subunit 2 family.

Its subcellular location is the mitochondrion inner membrane. The enzyme catalyses a ubiquinone + NADH + 5 H(+)(in) = a ubiquinol + NAD(+) + 4 H(+)(out). Core subunit of the mitochondrial membrane respiratory chain NADH dehydrogenase (Complex I) that is believed to belong to the minimal assembly required for catalysis. Complex I functions in the transfer of electrons from NADH to the respiratory chain. The immediate electron acceptor for the enzyme is believed to be ubiquinone. This Oenothera berteroana (Bertero's evening primrose) protein is NADH-ubiquinone oxidoreductase chain 2 (ND2).